Here is a 463-residue protein sequence, read N- to C-terminus: Putative glycine--tRNA ligase, cytoplasmic (463 aa).

Residues 25–54 (TLEDSHAAKPETNAAIELPNKSKPEKSAVE) form a disordered region. Residues 44–54 (NKSKPEKSAVE) show a composition bias toward basic and acidic residues. Residues Arg-153 and Glu-239 each contribute to the substrate site. Residues 271–273 (RNE) and 281–286 (LRTREF) each bind ATP. Substrate-binding positions include 286–290 (FTLAE) and Asn-376. 398 to 399 (EC) is a binding site for ATP.

This sequence belongs to the class-II aminoacyl-tRNA synthetase family. Homodimer.

The protein localises to the cytoplasm. The enzyme catalyses tRNA(Gly) + glycine + ATP = glycyl-tRNA(Gly) + AMP + diphosphate. Functionally, catalyzes the attachment of glycine to tRNA(Gly). Is also able produce diadenosine tetraphosphate (Ap4A), a universal pleiotropic signaling molecule needed for cell regulation pathways, by direct condensation of 2 ATPs. This chain is Putative glycine--tRNA ligase, cytoplasmic, found in Arabidopsis thaliana (Mouse-ear cress).